The sequence spans 110 residues: Nitrogenase-stabilizing/protective protein NifW (110 aa).

It belongs to the NifW family. Homotrimer; associates with NifD.

In terms of biological role, may protect the nitrogenase Fe-Mo protein from oxidative damage. This chain is Nitrogenase-stabilizing/protective protein NifW, found in Acidithiobacillus ferrooxidans (strain ATCC 23270 / DSM 14882 / CIP 104768 / NCIMB 8455) (Ferrobacillus ferrooxidans (strain ATCC 23270)).